Here is a 405-residue protein sequence, read N- to C-terminus: tRNA (uracil(54)-C(5))-methyltransferase (405 aa).

[4Fe-4S] cluster is bound by residues Cys-61, Cys-67, Cys-70, and Cys-137. S-adenosyl-L-methionine-binding positions include Gln-252, Tyr-278, Thr-283, Asp-299–Ser-300, Asp-326, and Asp-340. Cys-367 acts as the Nucleophile in catalysis. Glu-399 acts as the Proton acceptor in catalysis.

It belongs to the class I-like SAM-binding methyltransferase superfamily. RNA M5U methyltransferase family.

It catalyses the reaction uridine(54) in tRNA + S-adenosyl-L-methionine = 5-methyluridine(54) in tRNA + S-adenosyl-L-homocysteine + H(+). Its activity is regulated as follows. Activated by magnesium ions. Catalyzes the formation of 5-methyl-uridine at position 54 (m5U54) in tRNA. The polypeptide is tRNA (uracil(54)-C(5))-methyltransferase (Pyrococcus abyssi (strain GE5 / Orsay)).